The sequence spans 118 residues: Large ribosomal subunit protein bL20 (118 aa).

This sequence belongs to the bacterial ribosomal protein bL20 family.

In terms of biological role, binds directly to 23S ribosomal RNA and is necessary for the in vitro assembly process of the 50S ribosomal subunit. It is not involved in the protein synthesizing functions of that subunit. The polypeptide is Large ribosomal subunit protein bL20 (Aliarcobacter butzleri (strain RM4018) (Arcobacter butzleri)).